A 235-amino-acid polypeptide reads, in one-letter code: Aspartate/glutamate leucyltransferase (235 aa).

This sequence belongs to the R-transferase family. Bpt subfamily.

Its subcellular location is the cytoplasm. The enzyme catalyses N-terminal L-glutamyl-[protein] + L-leucyl-tRNA(Leu) = N-terminal L-leucyl-L-glutamyl-[protein] + tRNA(Leu) + H(+). It carries out the reaction N-terminal L-aspartyl-[protein] + L-leucyl-tRNA(Leu) = N-terminal L-leucyl-L-aspartyl-[protein] + tRNA(Leu) + H(+). In terms of biological role, functions in the N-end rule pathway of protein degradation where it conjugates Leu from its aminoacyl-tRNA to the N-termini of proteins containing an N-terminal aspartate or glutamate. In Pseudomonas paraeruginosa (strain DSM 24068 / PA7) (Pseudomonas aeruginosa (strain PA7)), this protein is Aspartate/glutamate leucyltransferase.